Here is a 775-residue protein sequence, read N- to C-terminus: Suppressor of glycerol defect protein 1 (775 aa).

Basic residues-rich tracts occupy residues 1–11 (MRPIKKSRSLK) and 28–49 (RRGK…RISR). 2 disordered regions span residues 1–101 (MRPI…LLDP) and 152–253 (IDDI…GGDK). Composition is skewed to basic and acidic residues over residues 52–79 (NGYE…DAHR), 177–193 (TGDH…REGN), and 209–223 (DEFH…RMDP). One can recognise an MIF4G domain in the interval 262 to 463 (RRKLQGSLNK…ESITNLKENK (202 aa)). Positions 565 to 689 (TLRTSIFVAL…PLTILKHVDF (125 aa)) constitute an MI domain.

Belongs to the CWC22 family.

It is found in the nucleus. The protein localises to the nucleolus. In terms of biological role, involved in osmoregulatory glycerol response. This is Suppressor of glycerol defect protein 1 (sgd1) from Schizosaccharomyces pombe (strain 972 / ATCC 24843) (Fission yeast).